A 168-amino-acid polypeptide reads, in one-letter code: Transcription antitermination protein NusB (168 aa).

Belongs to the NusB family.

Functionally, involved in transcription antitermination. Required for transcription of ribosomal RNA (rRNA) genes. Binds specifically to the boxA antiterminator sequence of the ribosomal RNA (rrn) operons. This chain is Transcription antitermination protein NusB, found in Brucella anthropi (strain ATCC 49188 / DSM 6882 / CCUG 24695 / JCM 21032 / LMG 3331 / NBRC 15819 / NCTC 12168 / Alc 37) (Ochrobactrum anthropi).